Here is a 141-residue protein sequence, read N- to C-terminus: Elongation factor G, chloroplastic (141 aa).

One can recognise a tr-type G domain in the interval 12-141 (KDYRNIGIMA…VPRICFVNKM (130 aa)). GTP contacts are provided by residues 21–28 (AHIDAGKT) and 85–89 (DTPGH).

It belongs to the TRAFAC class translation factor GTPase superfamily. Classic translation factor GTPase family. EF-G/EF-2 subfamily.

It is found in the plastid. The protein localises to the chloroplast. The protein operates within protein biosynthesis; polypeptide chain elongation. Functionally, chloroplast-localized elongation factor EF-G involved in protein synthesis in plastids. Catalyzes the GTP-dependent ribosomal translocation step during translation elongation. During this step, the ribosome changes from the pre-translocational (PRE) to the post-translocational (POST) state as the newly formed A-site-bound peptidyl-tRNA and P-site-bound deacylated tRNA move to the P and E sites, respectively. Catalyzes the coordinated movement of the two tRNA molecules, the mRNA and conformational changes in the ribosome. The polypeptide is Elongation factor G, chloroplastic (fusA) (Pisum sativum (Garden pea)).